The chain runs to 366 residues: D-alanine--D-alanine ligase (366 aa).

Positions 145–348 (KRLLDDAGLA…YQSLITKLIE (204 aa)) constitute an ATP-grasp domain. Residue 175–230 (VEQLGLPLFIKPANLGSSVGISKVNNEAEFNAALSMAFEYDLKVIIESAIVGREIE) participates in ATP binding. D302, E315, and N317 together coordinate Mg(2+).

This sequence belongs to the D-alanine--D-alanine ligase family. Mg(2+) serves as cofactor. Mn(2+) is required as a cofactor.

The protein resides in the cytoplasm. It carries out the reaction 2 D-alanine + ATP = D-alanyl-D-alanine + ADP + phosphate + H(+). It functions in the pathway cell wall biogenesis; peptidoglycan biosynthesis. In terms of biological role, cell wall formation. The sequence is that of D-alanine--D-alanine ligase from Proteus mirabilis (strain HI4320).